A 166-amino-acid chain; its full sequence is MAHIEKQAGELQEKLIAVNRVSKTVKGGRIFSFTALTVVGDGNGRVGFGYGKAREVPAAIQKAMEKARRNMINVALNHGTLQHPVKGAHTGSRVFMQPASEGTGIIAGGAMRAVLEVAGVHNVLAKAYGSTNPINVVRATIDGLANMKSPEMVAAKRGKSVEEILG.

An S5 DRBM domain is found at 11–74 (LQEKLIAVNR…EKARRNMINV (64 aa)).

This sequence belongs to the universal ribosomal protein uS5 family. Part of the 30S ribosomal subunit. Contacts proteins S4 and S8.

In terms of biological role, with S4 and S12 plays an important role in translational accuracy. Functionally, located at the back of the 30S subunit body where it stabilizes the conformation of the head with respect to the body. This chain is Small ribosomal subunit protein uS5, found in Cronobacter sakazakii (strain ATCC BAA-894) (Enterobacter sakazakii).